Reading from the N-terminus, the 147-residue chain is Receptor activity-modifying protein 3 (147 aa).

A signal peptide spans 1-22 (MKTPAQRLHLLPLLLLLCGECA). Residues 23–112 (QVCGCNETGM…CTVDRTHWED (90 aa)) lie on the Extracellular side of the membrane. N-linked (GlcNAc...) asparagine glycans are attached at residues Asn-28, Asn-57, Asn-70, and Asn-102. 2 disulfide bridges follow: Cys-39/Cys-71 and Cys-56/Cys-103. Residues 113–137 (PPDEVLIPLIAVPVVLTVAMAGLVV) form a helical membrane-spanning segment. Over 138-147 (WRSKHTDRLL) the chain is Cytoplasmic.

This sequence belongs to the RAMP family. Heterodimer of CALCRL and RAMP3; interaction induces allosteric modulation of CALCRL function and ligand specificity for adrenomedullin/ADM and intermedin/ADM2. Heterodimer of CALCR and RAMP3; interaction form the receptor complex AMYR3 for amylin/IAPP. Interacts with GPER1. As to expression, expressed predominantly in the testis, embryonic and adult brain and in kidney.

The protein resides in the cell membrane. It is found in the membrane. Accessory protein that interacts with and modulates the function of G-protein coupled receptors including calcitonin gene-related peptide type 1 receptor (CALCRL), calcitonin receptor (CALCR) and G-protein coupled estrogen receptor 1 (GPER1). Required for the transport of CALCRL and GPER1 receptors to the plasma membrane. Plays a role in cardioprotection by reducing cardiac hypertrophy and perivascular fibrosis in a GPER1-dependent manner. Together with CALCRL, form a receptor complex for adrenomedullin/ADM and intermedin/ADM2. Together with CALCR, act as a receptor complex for amylin/IAPP. This is Receptor activity-modifying protein 3 from Mus musculus (Mouse).